The primary structure comprises 204 residues: Large ribosomal subunit protein uL4 (204 aa).

Residues 48–75 (HTKGRSDVSGGGKKPWRQKGRGGARAGS) are disordered.

Belongs to the universal ribosomal protein uL4 family. Part of the 50S ribosomal subunit.

Functionally, one of the primary rRNA binding proteins, this protein initially binds near the 5'-end of the 23S rRNA. It is important during the early stages of 50S assembly. It makes multiple contacts with different domains of the 23S rRNA in the assembled 50S subunit and ribosome. Forms part of the polypeptide exit tunnel. The sequence is that of Large ribosomal subunit protein uL4 from Campylobacter fetus subsp. fetus (strain 82-40).